Here is a 179-residue protein sequence, read N- to C-terminus: Large ribosomal subunit protein uL5 (179 aa).

The protein belongs to the universal ribosomal protein uL5 family. Part of the 50S ribosomal subunit; part of the 5S rRNA/L5/L18/L25 subcomplex. Contacts the 5S rRNA and the P site tRNA. Forms a bridge to the 30S subunit in the 70S ribosome.

Functionally, this is one of the proteins that bind and probably mediate the attachment of the 5S RNA into the large ribosomal subunit, where it forms part of the central protuberance. In the 70S ribosome it contacts protein S13 of the 30S subunit (bridge B1b), connecting the 2 subunits; this bridge is implicated in subunit movement. Contacts the P site tRNA; the 5S rRNA and some of its associated proteins might help stabilize positioning of ribosome-bound tRNAs. This is Large ribosomal subunit protein uL5 from Bacillus cereus (strain G9842).